Consider the following 335-residue polypeptide: tRNA-dihydrouridine(20/20a) synthase (335 aa).

Residues 19-21 and Gln72 contribute to the FMN site; that span reads PMM. Cys102 functions as the Proton donor in the catalytic mechanism. FMN is bound by residues Lys141, His173, 213–215, and 235–236; these read NGG and GR.

Belongs to the Dus family. DusA subfamily. The cofactor is FMN.

It carries out the reaction 5,6-dihydrouridine(20) in tRNA + NADP(+) = uridine(20) in tRNA + NADPH + H(+). The enzyme catalyses 5,6-dihydrouridine(20) in tRNA + NAD(+) = uridine(20) in tRNA + NADH + H(+). It catalyses the reaction 5,6-dihydrouridine(20a) in tRNA + NADP(+) = uridine(20a) in tRNA + NADPH + H(+). The catalysed reaction is 5,6-dihydrouridine(20a) in tRNA + NAD(+) = uridine(20a) in tRNA + NADH + H(+). Catalyzes the synthesis of 5,6-dihydrouridine (D), a modified base found in the D-loop of most tRNAs, via the reduction of the C5-C6 double bond in target uridines. Specifically modifies U20 and U20a in tRNAs. This chain is tRNA-dihydrouridine(20/20a) synthase, found in Xanthomonas campestris pv. campestris (strain ATCC 33913 / DSM 3586 / NCPPB 528 / LMG 568 / P 25).